Reading from the N-terminus, the 469-residue chain is Calcium/calmodulin-dependent protein kinase type IV (469 aa).

Phosphoserine; by autocatalysis occurs at positions 11 and 12. Residues 42–296 (FEVESELGRG…TFQALQHPWV (255 aa)) enclose the Protein kinase domain. Residues 48 to 56 (LGRGATSIV) and K71 each bind ATP. Residue T53 is glycosylated (O-linked (GlcNAc) threonine). An O-linked (GlcNAc) serine glycan is attached at S54. O-linked (GlcNAc) serine glycosylation is present at S133. The Proton acceptor role is filled by D160. An O-linked (GlcNAc) serine glycan is attached at S185. T196 bears the Phosphothreonine mark. The autoinhibitory domain stretch occupies residues 297-336 (TGKAANFVHMDTAQKKLQEFNARRKLKAAVKAVVASSRLG). The segment at 302 to 319 (NFVHMDTAQKKLQEFNAR) is PP2A-binding. The calmodulin-binding stretch occupies residues 318 to 337 (ARRKLKAAVKAVVASSRLGS). The residue at position 332 (S332) is a Phosphoserine; by autocatalysis. The disordered stretch occupies residues 336-469 (GSASSSHTSI…PQQDAIQPEY (134 aa)). S337 is modified (phosphoserine). O-linked (GlcNAc) serine glycosylation is found at S340, S341, and S352. Residues 360-374 (DAKDSTDLLGKKMQE) show a composition bias toward basic and acidic residues. Residues 375–388 (EDQEEDQVEAEASA) are compositionally biased toward acidic residues. Basic and acidic residues predominate over residues 389 to 409 (DEMRKLQSEEVEKDAGVKEEE). Residues 417 to 426 (DPEDELETDD) are compositionally biased toward acidic residues. Positions 427 to 441 (PEMKRDSEEKLKSVE) are enriched in basic and acidic residues. Residues S433 and S439 each carry the phosphoserine modification. Residues 442 to 453 (EEMDPMTEEEAP) show a composition bias toward acidic residues.

Belongs to the protein kinase superfamily. CAMK Ser/Thr protein kinase family. CaMK subfamily. As to quaternary structure, monomer. Interacts with protein phosphatase 2A (PPP2CA/PPP2CB); the interaction is mutually exclusive with binding to Ca(2+)/calmodulin. In terms of processing, phosphorylated by CaMKK1 and CaMKK2 on Thr-196. Dephosphorylated by protein phosphatase 2A. Autophosphorylated on Ser-11 and Ser-12. Glycosylation at Ser-185 modulates the phosphorylation of CaMK4 at Thr-196 and negatively regulates its activity toward CREB1 in basal conditions and during early inomycin stimulation. In terms of tissue distribution, expressed in brain and testis.

The protein resides in the cytoplasm. It localises to the nucleus. It catalyses the reaction L-seryl-[protein] + ATP = O-phospho-L-seryl-[protein] + ADP + H(+). It carries out the reaction L-threonyl-[protein] + ATP = O-phospho-L-threonyl-[protein] + ADP + H(+). With respect to regulation, activated by Ca(2+)/calmodulin. Binding of calmodulin results in conformational change that relieves intrasteric autoinhibition and allows phosphorylation of Thr-196 within the activation loop by CaMKK1 or CaMKK2. Phosphorylation of Thr-196 results in a 10-20-fold increase in total activity to generate Ca(2+)/calmodulin-independent activity. Autophosphorylation of the N-terminus Ser-11 and Ser-12 is required for full activation. Inactivated by protein phosphatase 2A (PPP2CA/PPP2CB) which dephosphorylates Thr-196, thereby terminating autonomous activity and helping to maintain the enzyme in its autoinhibited state. Calcium/calmodulin-dependent protein kinase that operates in the calcium-triggered CaMKK-CaMK4 signaling cascade and regulates, mainly by phosphorylation, the activity of several transcription activators, such as CREB1, MEF2D, JUN and RORA, which play pivotal roles in immune response, inflammation, and memory consolidation. In the thymus, regulates the CD4(+)/CD8(+) double positive thymocytes selection threshold during T-cell ontogeny. In CD4 memory T-cells, is required to link T-cell antigen receptor (TCR) signaling to the production of IL2, IFNG and IL4 (through the regulation of CREB and MEF2). Regulates the differentiation and survival phases of osteoclasts and dendritic cells (DCs). Mediates DCs survival by linking TLR4 and the regulation of temporal expression of BCL2. Phosphorylates the transcription activator CREB1 on 'Ser-133' in hippocampal neuron nuclei and contribute to memory consolidation and long term potentiation (LTP) in the hippocampus. Can activate the MAP kinases MAPK1/ERK2, MAPK8/JNK1 and MAPK14/p38 and stimulate transcription through the phosphorylation of ELK1 and ATF2. Can also phosphorylate in vitro CREBBP, PRM2, MEF2A and STMN1/OP18. May be involved in spermatogenesis. The protein is Calcium/calmodulin-dependent protein kinase type IV (Camk4) of Mus musculus (Mouse).